The chain runs to 329 residues: Short-chain dehydrogenase/reductase prx4 (329 aa).

Residues 1-21 form the signal peptide; sequence MIPRWQPASIALLLHLDTLRC. Residues serine 58, isoleucine 60, and asparagine 81 each coordinate NADP(+). Residue asparagine 91 is glycosylated (N-linked (GlcNAc...) asparagine). NADP(+) contacts are provided by aspartate 98, asparagine 121, lysine 161, tyrosine 194, lysine 198, and threonine 229. Tyrosine 194 acts as the Proton acceptor in catalysis. The active-site Lowers pKa of active site Tyr is lysine 198. The chain crosses the membrane as a helical span at residues 238 to 258; it reads GPLMAAGLPVSSAHMVGLAVV.

This sequence belongs to the short-chain dehydrogenases/reductases (SDR) family.

It localises to the membrane. It functions in the pathway sesquiterpene biosynthesis. In terms of biological role, short-chain dehydrogenase/reductase; part of the gene cluster that mediates the biosynthesis of PR-toxin, a bicyclic sesquiterpene belonging to the eremophilane class and acting as a mycotoxin. The first step of the pathway is catalyzed by the aristolochene synthase which performs the cyclization of trans,trans-farnesyl diphosphate (FPP) to the bicyclic sesquiterpene aristolochene. Following the formation of aristolochene, the non-oxygenated aristolochene is converted to the trioxygenated intermediate eremofortin B, via 7-epi-neopetasone. This conversion appears to involve three enzymes, a hydroxysterol oxidase-like enzyme, the quinone-oxidase prx3 that forms the quinone-type-structure in the bicyclic nucleus of aristolochene with the C8-oxo group and the C-3 hydroxyl group, and the P450 monooxygenase prx9 that introduces the epoxide at the double bond between carbons 1 and 2. No monoxy or dioxy-intermediates have been reported to be released to the broth, so these three early oxidative reactions may be coupled together. Eremofortin B is further oxidized by another P450 monooxygenase, that introduces a second epoxide between carbons 7 and 11 prior to acetylation to eremofortin A by the acetyltransferase prx11. The second epoxidation may be performed by a second P450 monooxygenase. After the acetylation step, eremofortin A is converted to eremofortin C and then to PR-toxin. First the conversion of eremofortin A to eremofortin C proceeds by oxidation of the side chain of the molecule at C-12 and is catalyzed by the short-chain oxidoreductase prx1. The cytochrome P450 monooxygenase prx8 also plays a role in this step. The primary alcohol formed at C-12 is finally oxidized by the short-chain alcohol dehydrogenase prx4 that forms PR-toxin. In Penicillium rubens (strain ATCC 28089 / DSM 1075 / NRRL 1951 / Wisconsin 54-1255) (Penicillium chrysogenum), this protein is Short-chain dehydrogenase/reductase prx4.